A 281-amino-acid chain; its full sequence is MAGVCAVKVGIIGGSGLDDPDILEGRLEKYVDTPFGKPSDALVLGKIKNVDCVLLASRHGRQHTIAPTNVNYRANIWALKSEGCTHILVTTACGSLREEIQPGDIVIVDQFIDRTTKREQTFYDGGPSCLPGVCHIPMAEPFCAKTREVLIDIAKRLGIKCHSKGAMITIEGPRFSSKAESQMFRLWGADVINMTTVPEVILAKEAGICYASIAMATDYDCWKEHEEAVSVDRVLKTLKENANKATSILLTAIPQIAAMDWTELLQSMKSTVQLSVMLPKH.

Phosphate contacts are provided by residues Ser15, 58 to 59 (RH), and 91 to 92 (TA). Met194 is a substrate binding site. Position 195 (Thr195) interacts with phosphate. Substrate is bound at residue 218 to 220 (DYD).

It belongs to the PNP/MTAP phosphorylase family. MTAP subfamily. In terms of assembly, homotrimer.

Its subcellular location is the cytoplasm. The protein localises to the nucleus. It catalyses the reaction S-methyl-5'-thioadenosine + phosphate = 5-(methylsulfanyl)-alpha-D-ribose 1-phosphate + adenine. Its pathway is amino-acid biosynthesis; L-methionine biosynthesis via salvage pathway; S-methyl-5-thio-alpha-D-ribose 1-phosphate from S-methyl-5'-thioadenosine (phosphorylase route): step 1/1. Functionally, catalyzes the reversible phosphorylation of S-methyl-5'-thioadenosine (MTA) to adenine and 5-methylthioribose-1-phosphate. Involved in the breakdown of MTA, a major by-product of polyamine biosynthesis. Responsible for the first step in the methionine salvage pathway after MTA has been generated from S-adenosylmethionine. Has broad substrate specificity with 6-aminopurine nucleosides as preferred substrates. In Xenopus tropicalis (Western clawed frog), this protein is S-methyl-5'-thioadenosine phosphorylase (mtap).